Consider the following 477-residue polypeptide: Proton-coupled amino acid transporter 3 (477 aa).

At 1–54 (MGNVPLLREVGKCQRNMFGRSTASSKGSSNSRSSSSTSPKKGPRREADALMFIQ) the chain is on the cytoplasmic side. Positions 19 to 40 (GRSTASSKGSSNSRSSSSTSPK) are enriched in low complexity. A disordered region spans residues 19–43 (GRSTASSKGSSNSRSSSSTSPKKGP). A helical membrane pass occupies residues 55–75 (IFIHLLKSNIGTGFLGLPLAV). The Extracellular portion of the chain corresponds to 76-77 (KN). A helical membrane pass occupies residues 78–98 (AGLLVGPVSLLAIGALTVHCM). Over 99-144 (DILLNCACHLTQRLQRSFVNYEETTMYSLETCPSPWLRTHSVWGRY) the chain is Cytoplasmic. A helical membrane pass occupies residues 145–165 (VVSFLLIVTQLGFCSVYFMFL). At 166-202 (ADNLQQIMEEAHFTSNVCQPRQSLVMTSILDTRFYML) the chain is on the extracellular side. Residues 203 to 223 (TILPFLILLVLIQNPQVLSIF) traverse the membrane as a helical segment. Over 224-225 (ST) the chain is Cytoplasmic. Residues 226 to 246 (LATITTLSSLALIFEYLIQTP) form a helical membrane-spanning segment. Over 247 to 259 (HHSNLPLVANWKT) the chain is Extracellular. A helical transmembrane segment spans residues 260 to 280 (FLLFFGTAIFTFEGVGMVLPL). The Cytoplasmic portion of the chain corresponds to 281-291 (KSQMKSPQQFP). The chain crosses the membrane as a helical span at residues 292–312 (AVLYLGMSFVIFLYICLGTLG). Residues 313–344 (YMKFGTDTQASITLNLPICWLYQSVKLMYSVG) lie on the Extracellular side of the membrane. The helical transmembrane segment at 345-365 (IFFTYALQFHVPAEIIVPYVV) threads the bilayer. The Cytoplasmic segment spans residues 366 to 374 (SRVSENWAL). The helical transmembrane segment at 375–395 (FVDLTVRTALVCLTCFSAVLI) threads the bilayer. Topologically, residues 396–399 (PRLD) are extracellular. The helical transmembrane segment at 400-420 (LVISLVGSVSSSALAIIIPPL) threads the bilayer. Over 421-432 (LEIATFYSENIS) the chain is Cytoplasmic. Residues 433–453 (CATIVKDIMISILGLLGCVLG) form a helical membrane-spanning segment. The Extracellular segment spans residues 454–477 (TYQALYEMTQQTHFYMANSTRVHI).

The protein belongs to the amino acid/polyamine transporter 2 family. As to expression, specifically expressed in testis.

Its subcellular location is the membrane. The chain is Proton-coupled amino acid transporter 3 (Slc36a3) from Mus musculus (Mouse).